Here is a 542-residue protein sequence, read N- to C-terminus: Probable cysteine proteinase 361L (542 aa).

Active-site residues include cysteine 172, histidine 382, and asparagine 414. A helical transmembrane segment spans residues 520-540 (TNNWYIYALIIIFILIIFFVL).

Belongs to the peptidase C1 family.

The protein localises to the membrane. Probable cysteine protease. The polypeptide is Probable cysteine proteinase 361L (Acheta domesticus (House cricket)).